A 1374-amino-acid chain; its full sequence is L-2-aminoadipate reductase large subunit (1374 aa).

The region spanning 828 to 905 is the Carrier domain; the sequence is SEFNQQEREI…AFAAEVSRLK (78 aa). Ser-865 bears the O-(pantetheine 4'-phosphoryl)serine mark.

Belongs to the ATP-dependent AMP-binding enzyme family. As to quaternary structure, heterodimer of an alpha and a beta subunit. Pantetheine 4'-phosphate is required as a cofactor.

The catalysed reaction is (S)-2-amino-6-oxohexanoate + NADP(+) + H2O = L-2-aminoadipate + NADPH + 2 H(+). It catalyses the reaction (S)-2-amino-6-oxohexanoate + NAD(+) + H2O = L-2-aminoadipate + NADH + 2 H(+). It carries out the reaction (S)-2-amino-6-oxohexanoate + AMP + diphosphate + NADP(+) = L-2-aminoadipate + ATP + NADPH + H(+). Its pathway is amino-acid biosynthesis; L-lysine biosynthesis via AAA pathway; L-lysine from L-alpha-aminoadipate (fungal route): step 1/3. Its function is as follows. Catalyzes the activation of alpha-aminoadipate by ATP-dependent adenylation and the reduction of activated alpha-aminoadipate by NADPH. The activated alpha-aminoadipate is bound to the phosphopantheinyl group of the enzyme itself before it is reduced to (S)-2-amino-6-oxohexanoate. This Candida glabrata (strain ATCC 2001 / BCRC 20586 / JCM 3761 / NBRC 0622 / NRRL Y-65 / CBS 138) (Yeast) protein is L-2-aminoadipate reductase large subunit (LYS2).